The primary structure comprises 109 residues: Cortistatin (109 aa).

Residues 1-25 (MMGGRGTGGKWPSAFGLLLLWGVAA) form the signal peptide. Residues 26–93 (SALPLESGPT…PPPQQPPHLD (68 aa)) constitute a propeptide that is removed on maturation. A disordered region spans residues 64 to 97 (ASSSTPVGGGTPGLSKSQERPPPQQPPHLDKKPC). A disulfide bridge connects residues Cys97 and Cys108.

It belongs to the somatostatin family. Expressed in a subset of GABAergic cells in the cortex and hippocampus.

Its subcellular location is the secreted. The polypeptide is Cortistatin (Cort) (Mus musculus (Mouse)).